The primary structure comprises 464 residues: NADH-quinone oxidoreductase subunit N (464 aa).

14 consecutive transmembrane segments (helical) span residues 6–26, 36–56, 75–95, 101–121, 123–143, 157–177, 197–217, 231–253, 257–279, 293–313, 317–337, 360–380, 395–415, and 439–459; these read FLYI…LVLG, SMSL…LIYF, CLAR…FFFA, YEFA…VEAH, FLSF…LVCF, FFVL…LVYG, LGAT…LGAV, PTVA…FAGL, VVIP…MVVG, FAYA…TGVV, PVLF…TVLL, AFTF…SGFF, FGVP…IPCF, and NVGL…VVLL.

The protein belongs to the complex I subunit 2 family. In terms of assembly, NDH-1 is composed of 14 different subunits. Subunits NuoA, H, J, K, L, M, N constitute the membrane sector of the complex.

The protein localises to the cell inner membrane. It catalyses the reaction a quinone + NADH + 5 H(+)(in) = a quinol + NAD(+) + 4 H(+)(out). NDH-1 shuttles electrons from NADH, via FMN and iron-sulfur (Fe-S) centers, to quinones in the respiratory chain. The immediate electron acceptor for the enzyme in this species is believed to be ubiquinone. Couples the redox reaction to proton translocation (for every two electrons transferred, four hydrogen ions are translocated across the cytoplasmic membrane), and thus conserves the redox energy in a proton gradient. In Anaplasma phagocytophilum (strain HZ), this protein is NADH-quinone oxidoreductase subunit N.